The primary structure comprises 189 residues: UPF0398 protein lp_1753 (189 aa).

It belongs to the UPF0398 family.

In Lactiplantibacillus plantarum (strain ATCC BAA-793 / NCIMB 8826 / WCFS1) (Lactobacillus plantarum), this protein is UPF0398 protein lp_1753.